A 133-amino-acid chain; its full sequence is Small ribosomal subunit protein uS8 (133 aa).

The protein belongs to the universal ribosomal protein uS8 family. Part of the 30S ribosomal subunit.

Its function is as follows. One of the primary rRNA binding proteins, it binds directly to 16S rRNA central domain where it helps coordinate assembly of the platform of the 30S subunit. The sequence is that of Small ribosomal subunit protein uS8 from Desulfurococcus amylolyticus (strain DSM 18924 / JCM 16383 / VKM B-2413 / 1221n) (Desulfurococcus kamchatkensis).